A 155-amino-acid chain; its full sequence is Small ribosomal subunit protein uS17 (155 aa).

At alanine 2 the chain carries N-acetylalanine.

The protein belongs to the universal ribosomal protein uS17 family.

The sequence is that of Small ribosomal subunit protein uS17 from Drosophila yakuba (Fruit fly).